We begin with the raw amino-acid sequence, 89 residues long: Small ribosomal subunit protein bS20 (89 aa).

The disordered stretch occupies residues 1-28; it reads MTLANIKSAKKRAIQSEKRRQHNASQRS.

This sequence belongs to the bacterial ribosomal protein bS20 family.

Its function is as follows. Binds directly to 16S ribosomal RNA. The sequence is that of Small ribosomal subunit protein bS20 from Pasteurella multocida (strain Pm70).